The following is a 205-amino-acid chain: Small ribosomal subunit protein uS4 (205 aa).

The interval 18 to 49 is disordered; that stretch reads NIWGRPKSPVNKREYGPGQHGQRRKGKLSDFG. The S4 RNA-binding domain occupies 94–157; the sequence is RRLDTVVYRA…KQLALVLEAN (64 aa).

It belongs to the universal ribosomal protein uS4 family. Part of the 30S ribosomal subunit. Contacts protein S5. The interaction surface between S4 and S5 is involved in control of translational fidelity.

One of the primary rRNA binding proteins, it binds directly to 16S rRNA where it nucleates assembly of the body of the 30S subunit. Functionally, with S5 and S12 plays an important role in translational accuracy. The polypeptide is Small ribosomal subunit protein uS4 (Nitrobacter hamburgensis (strain DSM 10229 / NCIMB 13809 / X14)).